Consider the following 185-residue polypeptide: Ribosome-recycling factor (185 aa).

The segment at 135-159 (ANDKLKASEKNKEASEDEVKRAQEK) is disordered.

Belongs to the RRF family.

Its subcellular location is the cytoplasm. Its function is as follows. Responsible for the release of ribosomes from messenger RNA at the termination of protein biosynthesis. May increase the efficiency of translation by recycling ribosomes from one round of translation to another. The sequence is that of Ribosome-recycling factor from Moorella thermoacetica (strain ATCC 39073 / JCM 9320).